Reading from the N-terminus, the 335-residue chain is Glucokinase (335 aa).

11-16 is a binding site for ATP; that stretch reads ADIGGT.

The protein belongs to the bacterial glucokinase family.

It localises to the cytoplasm. The catalysed reaction is D-glucose + ATP = D-glucose 6-phosphate + ADP + H(+). The chain is Glucokinase from Xanthomonas axonopodis pv. citri (strain 306).